The chain runs to 253 residues: Tryptophan synthase alpha chain (253 aa).

Catalysis depends on proton acceptor residues Glu48 and Asp59.

It belongs to the TrpA family. As to quaternary structure, tetramer of two alpha and two beta chains.

The catalysed reaction is (1S,2R)-1-C-(indol-3-yl)glycerol 3-phosphate + L-serine = D-glyceraldehyde 3-phosphate + L-tryptophan + H2O. The protein operates within amino-acid biosynthesis; L-tryptophan biosynthesis; L-tryptophan from chorismate: step 5/5. The alpha subunit is responsible for the aldol cleavage of indoleglycerol phosphate to indole and glyceraldehyde 3-phosphate. The polypeptide is Tryptophan synthase alpha chain (Caldicellulosiruptor saccharolyticus (strain ATCC 43494 / DSM 8903 / Tp8T 6331)).